The sequence spans 257 residues: uncharacterized protein (257 aa).

The first 22 residues, 1–22 (MRYLKRLSWYISILILIVVIAG), serve as a signal peptide directing secretion. The N-palmitoyl cysteine moiety is linked to residue Cys-23. A lipid anchor (S-diacylglycerol cysteine) is attached at Cys-23.

This sequence belongs to the staphylococcal tandem lipoprotein family.

Its subcellular location is the cell membrane. This is an uncharacterized protein from Staphylococcus aureus (strain N315).